Reading from the N-terminus, the 354-residue chain is Selenide, water dikinase (354 aa).

The active site involves Sec21. Position 21 (Sec21) is a non-standard amino acid, selenocysteine. ATP-binding positions include Lys24 and 51–53 (TSD). Position 54 (Asp54) interacts with Mg(2+). ATP-binding positions include Asp71, Asp94, and 141 to 143 (GHT). Asp94 provides a ligand contact to Mg(2+). Asp229 lines the Mg(2+) pocket.

Belongs to the selenophosphate synthase 1 family. Class I subfamily. Homodimer. Requires Mg(2+) as cofactor.

The catalysed reaction is hydrogenselenide + ATP + H2O = selenophosphate + AMP + phosphate + 2 H(+). Functionally, synthesizes selenophosphate from selenide and ATP. The sequence is that of Selenide, water dikinase from Treponema denticola (strain ATCC 35405 / DSM 14222 / CIP 103919 / JCM 8153 / KCTC 15104).